Reading from the N-terminus, the 317-residue chain is DNA-directed RNA polymerase III subunit RPC6 (317 aa).

This sequence belongs to the eukaryotic RPC34/RPC39 RNA polymerase subunit family. As to quaternary structure, component of the RNA polymerase III (Pol III) complex consisting of 17 subunits. Interacts with BRF1/TDS4.

It is found in the nucleus. Functionally, DNA-dependent RNA polymerase catalyzes the transcription of DNA into RNA using the four ribonucleoside triphosphates as substrates. Specific peripheric component of RNA polymerase III which synthesizes small RNAs, such as 5S rRNA and tRNAs. Involved in recruitment of Pol III to the preinitiation complex. Involved in the configuration of an initiation-competent form of RNA polymerase. The sequence is that of DNA-directed RNA polymerase III subunit RPC6 (RPC34) from Saccharomyces cerevisiae (strain ATCC 204508 / S288c) (Baker's yeast).